Consider the following 397-residue polypeptide: uncharacterized protein (397 aa).

The disordered stretch occupies residues 368–391 (TTKPGLHQPTQKRPTQTTSKPYIN). Positions 375-388 (QPTQKRPTQTTSKP) are enriched in polar residues.

This is an uncharacterized protein from Acanthamoeba polyphaga mimivirus (APMV).